The following is a 436-amino-acid chain: Succinyl-CoA:glutarate CoA-transferase (436 aa).

The transit peptide at 1 to 8 (MLWMLARA) directs the protein to the mitochondrion. Aspartate 203 serves as the catalytic Nucleophile. N6-acetyllysine occurs at positions 392 and 423.

It belongs to the CoA-transferase III family.

It localises to the mitochondrion. The enzyme catalyses glutarate + succinyl-CoA = glutaryl-CoA + succinate. The catalysed reaction is 3-hydroxy-3-methylglutarate + succinyl-CoA = (3S)-3-hydroxy-3-methylglutaryl-CoA + succinate. It catalyses the reaction 3-hydroxy-3-methylglutarate + glutaryl-CoA = (3S)-3-hydroxy-3-methylglutaryl-CoA + glutarate. It carries out the reaction hexanedioate + glutaryl-CoA = hexanedioyl-CoA + glutarate. The enzyme catalyses itaconate + glutaryl-CoA = itaconyl-CoA + glutarate. The catalysed reaction is itaconate + succinyl-CoA = itaconyl-CoA + succinate. In terms of biological role, coenzyme A (CoA) transferase that reversibly catalyzes the transfer of a CoA moiety from a dicarboxyl-CoA to a dicarboxylate in a metabolite recycling process. Displays preference for succinyl-CoA and glutarate-CoA as dicarboxyl-CoA donors and glutarate, succinate, adipate/hexanedioate, itaconate and 3-hydroxy-3-methylglutarate as dicarboxylate acceptors. Acts on intermediates or end products of lysine and tryptophan degradation pathway, in particular catalyzes succinyl-CoA-dependent reesterification of free glutarate into glutaryl-CoA to prevent renal excretion of glutarate. Upon inflammation, may convert macrophage-derived itaconate to itaconyl-CoA in erythroid precursors where it negatively regulates the TCA cycle and heme synthesis to limit erythroid differentiation in the context of stress erythropoiesis. The protein is Succinyl-CoA:glutarate CoA-transferase of Mus musculus (Mouse).